Here is a 67-residue protein sequence, read N- to C-terminus: Large ribosomal subunit protein bL31 (67 aa).

Residues C16, C18, C37, and C40 each coordinate Zn(2+).

It belongs to the bacterial ribosomal protein bL31 family. Type A subfamily. As to quaternary structure, part of the 50S ribosomal subunit. Zn(2+) serves as cofactor.

In terms of biological role, binds the 23S rRNA. The chain is Large ribosomal subunit protein bL31 from Methylococcus capsulatus (strain ATCC 33009 / NCIMB 11132 / Bath).